Here is a 434-residue protein sequence, read N- to C-terminus: Histidinol dehydrogenase (434 aa).

Positions 130, 188, and 211 each coordinate NAD(+). Residues Ser-237, Gln-259, and His-262 each contribute to the substrate site. Zn(2+) is bound by residues Gln-259 and His-262. Active-site proton acceptor residues include Glu-326 and His-327. Residues His-327, Asp-360, Glu-414, and His-419 each contribute to the substrate site. A Zn(2+)-binding site is contributed by Asp-360. His-419 is a Zn(2+) binding site.

This sequence belongs to the histidinol dehydrogenase family. As to quaternary structure, homodimer. Zn(2+) serves as cofactor.

It carries out the reaction L-histidinol + 2 NAD(+) + H2O = L-histidine + 2 NADH + 3 H(+). The protein operates within amino-acid biosynthesis; L-histidine biosynthesis; L-histidine from 5-phospho-alpha-D-ribose 1-diphosphate: step 9/9. Catalyzes the sequential NAD-dependent oxidations of L-histidinol to L-histidinaldehyde and then to L-histidine. This chain is Histidinol dehydrogenase, found in Shigella boydii serotype 4 (strain Sb227).